The primary structure comprises 506 residues: Glutamyl-tRNA(Gln) amidotransferase subunit A, mitochondrial (506 aa).

Active-site charge relay system residues include K62 and S141. The active-site Acyl-ester intermediate is the S165.

It belongs to the amidase family. GatA subfamily. As to quaternary structure, subunit of the heterotrimeric GatCAB amidotransferase (AdT) complex, composed of A, B and C subunits.

It localises to the mitochondrion. It carries out the reaction L-glutamyl-tRNA(Gln) + L-glutamine + ATP + H2O = L-glutaminyl-tRNA(Gln) + L-glutamate + ADP + phosphate + H(+). Its function is as follows. Allows the formation of correctly charged Gln-tRNA(Gln) through the transamidation of misacylated Glu-tRNA(Gln) in the mitochondria. The reaction takes place in the presence of glutamine and ATP through an activated gamma-phospho-Glu-tRNA(Gln). The sequence is that of Glutamyl-tRNA(Gln) amidotransferase subunit A, mitochondrial from Emericella nidulans (strain FGSC A4 / ATCC 38163 / CBS 112.46 / NRRL 194 / M139) (Aspergillus nidulans).